Consider the following 115-residue polypeptide: Photosystem II reaction center Psb28 protein (115 aa).

The protein belongs to the Psb28 family. In terms of assembly, part of the photosystem II complex.

Its subcellular location is the plastid. It is found in the chloroplast thylakoid membrane. This chain is Photosystem II reaction center Psb28 protein, found in Phaeodactylum tricornutum (strain CCAP 1055/1).